A 227-amino-acid chain; its full sequence is Protein GrpE (227 aa).

Over residues 1-18 the composition is skewed to polar residues; that stretch reads MTQGNQKTEGNPPEQVTV. Disordered regions lie at residues 1 to 57 and 193 to 227; these read MTQG…GAAT and TEEG…ASGD. The span at 19–35 shows a compositional bias: basic and acidic residues; it reads TDKRRIDPETGEVRHVP. Composition is skewed to low complexity over residues 41 to 50 and 199 to 213; these read GGTAPQAATA and EAAA…AAET.

Belongs to the GrpE family. As to quaternary structure, homodimer.

Its subcellular location is the cytoplasm. Participates actively in the response to hyperosmotic and heat shock by preventing the aggregation of stress-denatured proteins, in association with DnaK and GrpE. It is the nucleotide exchange factor for DnaK and may function as a thermosensor. Unfolded proteins bind initially to DnaJ; upon interaction with the DnaJ-bound protein, DnaK hydrolyzes its bound ATP, resulting in the formation of a stable complex. GrpE releases ADP from DnaK; ATP binding to DnaK triggers the release of the substrate protein, thus completing the reaction cycle. Several rounds of ATP-dependent interactions between DnaJ, DnaK and GrpE are required for fully efficient folding. This Mycolicibacterium paratuberculosis (strain ATCC BAA-968 / K-10) (Mycobacterium paratuberculosis) protein is Protein GrpE.